The following is a 2153-amino-acid chain: Genome polyprotein (2153 aa).

A lipid anchor (N-myristoyl glycine; by host) is attached at G2. Residues H213–D240 are disordered. A compositionally biased stretch (polar residues) spans P216–R232. An amphipathic alpha-helix region spans residues E565 to V584. Active-site for protease 2A activity residues include H864 and D880. The Zn(2+) site is built by C897 and C899. Catalysis depends on C951, which acts as the For protease 2A activity. Zn(2+) is bound by residues C957 and H959. A membrane-binding region spans residues S1088 to Q1158. Positions S1088–T1224 are oligomerization. An RNA-binding region spans residues S1109 to G1113. Residues T1187–V1346 form the SF3 helicase domain. G1214–S1221 is a binding site for ATP. Residues C1353, C1365, and C1370 each coordinate Zn(2+). The segment at C1353–C1370 adopts a C4-type; degenerate zinc-finger fold. The RNA-binding stretch occupies residues E1397 to V1404. The segment at L1408–Q1413 is oligomerization. Residues V1460–L1480 lie within the membrane without spanning it. At Y1491 the chain carries O-(5'-phospho-RNA)-tyrosine. Residues G1511–F1689 enclose the Peptidase C3 domain. Catalysis depends on for protease 3C activity residues H1550, E1581, and C1657. The RdRp catalytic domain occupies G1920–E2033. D1926 and D2019 together coordinate Mg(2+).

Belongs to the picornaviruses polyprotein family. In terms of assembly, interacts with capsid protein VP1 and capsid protein VP3 to form heterotrimeric protomers. As to quaternary structure, interacts with capsid protein VP0, and capsid protein VP3 to form heterotrimeric protomers. Five protomers subsequently associate to form pentamers which serve as building blocks for the capsid. Interacts with capsid protein VP2, capsid protein VP3 and capsid protein VP4 following cleavage of capsid protein VP0. Interacts (via C-terminus) with capsid protein VP4 (via C-terminus). Interacts with host CDHR3 (via N-terminus); this interaction occurs near each threefold vertex of the capsid and allows the virus attachment and entry into the host cell. Interacts with capsid protein VP1 and capsid protein VP3 in the mature capsid. Interacts with host CDHR3 (via N-terminus); this interaction occurs near each threefold vertex of the capsid and allows the virus attachment and entry into the host cell. In terms of assembly, interacts with capsid protein VP0 and capsid protein VP1 to form heterotrimeric protomers. Five protomers subsequently associate to form pentamers which serve as building blocks for the capsid. Interacts with capsid protein VP4 in the mature capsid. Interacts with protein 2C; this interaction may be important for virion morphogenesis. Interacts with host CDHR3 (via N-terminus); this interaction occurs near each threefold vertex of the capsid and allows the virus attachment and entry into the host cell. As to quaternary structure, interacts (via C-terminus) with capsid protein VP1 (via C-terminus). Interacts with capsid protein VP3. Homodimer. In terms of assembly, homohexamer; forms a hexameric ring structure with 6-fold symmetry characteristic of AAA+ ATPases. Interacts (via N-terminus) with host RTN3 (via reticulon domain); this interaction is important for viral replication. Interacts with capsid protein VP3; this interaction may be important for virion morphogenesis. As to quaternary structure, interacts with protein 3CD. Homodimer. Interacts with host GBF1. Interacts (via GOLD domain) with host ACBD3 (via GOLD domain); this interaction allows the formation of a viral protein 3A/ACBD3 heterotetramer with a 2:2 stoichiometry, which will stimulate the recruitment of host PI4KB in order to synthesize PI4P at the viral RNA replication sites. In terms of assembly, interacts with RNA-directed RNA polymerase. As to quaternary structure, interacts with protein 3AB and with RNA-directed RNA polymerase. Interacts with Viral protein genome-linked and with protein 3CD. It depends on Mg(2+) as a cofactor. Post-translationally, specific enzymatic cleavages in vivo by the viral proteases yield processing intermediates and the mature proteins. Myristoylation is required for the formation of pentamers during virus assembly. Further assembly of 12 pentamers and a molecule of genomic RNA generates the provirion. In terms of processing, during virion maturation, immature virions are rendered infectious following cleavage of VP0 into VP4 and VP2. This maturation seems to be an autocatalytic event triggered by the presence of RNA in the capsid and it is followed by a conformational change infectious virion. Post-translationally, myristoylation is required during RNA encapsidation and formation of the mature virus particle. VPg is uridylylated by the polymerase into VPg-pUpU. This acts as a nucleotide-peptide primer for the genomic RNA replication.

Its subcellular location is the virion. It is found in the host cytoplasm. The protein localises to the host cytoplasmic vesicle membrane. It localises to the host nucleus. It catalyses the reaction a ribonucleoside 5'-triphosphate + H2O = a ribonucleoside 5'-diphosphate + phosphate + H(+). The catalysed reaction is Selective cleavage of Gln-|-Gly bond in the poliovirus polyprotein. In other picornavirus reactions Glu may be substituted for Gln, and Ser or Thr for Gly.. It carries out the reaction Selective cleavage of Tyr-|-Gly bond in the picornavirus polyprotein.. The enzyme catalyses RNA(n) + a ribonucleoside 5'-triphosphate = RNA(n+1) + diphosphate. Its activity is regulated as follows. Replication or transcription is subject to high level of random mutations by the nucleotide analog ribavirin. Its function is as follows. Forms an icosahedral capsid of pseudo T=3 symmetry with capsid proteins VP2 and VP3. The capsid is 300 Angstroms in diameter, composed of 60 copies of each capsid protein and enclosing the viral positive strand RNA genome. Capsid protein VP1 mainly forms the vertices of the capsid. The VP1 C-termini form 60 dominant spike-like protrusions on the surface of the virion. Capsid protein VP1 interacts with host cell receptor CDHR3 to provide virion attachment to target host cells. This attachment induces virion internalization. Tyrosine kinases are probably involved in the entry process. After binding to its receptor, the capsid undergoes conformational changes. Capsid protein VP1 N-terminus (that contains an amphipathic alpha-helix) and capsid protein VP4 are externalized. Together, they shape a pore in the host membrane through which viral genome is translocated to host cell cytoplasm. In terms of biological role, forms an icosahedral capsid of pseudo T=3 symmetry with capsid proteins VP2 and VP3. The capsid is 300 Angstroms in diameter, composed of 60 copies of each capsid protein and enclosing the viral positive strand RNA genome. Functionally, lies on the inner surface of the capsid shell. After binding to the host receptor, the capsid undergoes conformational changes. Capsid protein VP4 is released, Capsid protein VP1 N-terminus is externalized, and together, they shape a pore in the host membrane through which the viral genome is translocated into the host cell cytoplasm. Component of immature procapsids, which is cleaved into capsid proteins VP4 and VP2 after maturation. Allows the capsid to remain inactive before the maturation step. Its function is as follows. Cysteine protease that cleaves viral polyprotein and specific host proteins. It is responsible for the autocatalytic cleavage between the P1 and P2 regions, which is the first cleavage occurring in the polyprotein. Also cleaves the host translation initiation factor EIF4G1, in order to shut down the capped cellular mRNA translation. Inhibits the host nucleus-cytoplasm protein and RNA trafficking by cleaving host members of the nuclear pores. Counteracts stress granule formation probably by antagonizing its assembly or promoting its dissassembly. In terms of biological role, plays an essential role in the virus replication cycle by acting as a viroporin. Creates a pore in the host endoplasmic reticulum and as a consequence releases Ca2+ in the cytoplasm of infected cell. In turn, high levels of cytoplasmic calcium may trigger membrane trafficking and transport of viral ER-associated proteins to viroplasms, sites of viral genome replication. Functionally, induces and associates with structural rearrangements of intracellular membranes. Displays RNA-binding, nucleotide binding and NTPase activities. May play a role in virion morphogenesis and viral RNA encapsidation by interacting with the capsid protein VP3. Localizes the viral replication complex to the surface of membranous vesicles. Together with protein 3CD binds the Cis-Active RNA Element (CRE) which is involved in RNA synthesis initiation. Acts as a cofactor to stimulate the activity of 3D polymerase, maybe through a nucleid acid chaperone activity. Its function is as follows. Localizes the viral replication complex to the surface of membranous vesicles. It inhibits host cell endoplasmic reticulum-to-Golgi apparatus transport and causes the disassembly of the Golgi complex, possibly through GBF1 interaction. This would result in depletion of MHC, trail receptors and IFN receptors at the host cell surface. Plays an essential role in viral RNA replication by recruiting ACBD3 and PI4KB at the viral replication sites, thereby allowing the formation of the rearranged membranous structures where viral replication takes place. In terms of biological role, acts as a primer for viral RNA replication and remains covalently bound to viral genomic RNA. VPg is uridylylated prior to priming replication into VPg-pUpU. The oriI viral genomic sequence may act as a template for this. The VPg-pUpU is then used as primer on the genomic RNA poly(A) by the RNA-dependent RNA polymerase to replicate the viral genome. During genome replication, the VPg-RNA linkage is removed by the host TDP2, thereby accelerating replication. During the late stage of the replication cycle, host TDP2 is excluded from sites of viral RNA synthesis and encapsidation, allowing for the generation of progeny virions. Functionally, involved in the viral replication complex and viral polypeptide maturation. It exhibits protease activity with a specificity and catalytic efficiency that is different from protease 3C. Protein 3CD lacks polymerase activity. Protein 3CD binds to the 5'UTR of the viral genome. Major viral protease that mediates proteolytic processing of the polyprotein. Cleaves host EIF5B, contributing to host translation shutoff. Also cleaves host PABPC1, contributing to host translation shutoff. Its function is as follows. Replicates the viral genomic RNA on the surface of intracellular membranes. May form linear arrays of subunits that propagate along a strong head-to-tail interaction called interface-I. Covalently attaches UMP to a tyrosine of VPg, which is used to prime RNA synthesis. The positive stranded RNA genome is first replicated at virus induced membranous vesicles, creating a dsRNA genomic replication form. This dsRNA is then used as template to synthesize positive stranded RNA genomes. ss(+)RNA genomes are either translated, replicated or encapsidated. This Homo sapiens (Human) protein is Genome polyprotein.